The primary structure comprises 319 residues: 4-hydroxy-3-methylbut-2-enyl diphosphate reductase (319 aa).

C17 serves as a coordination point for [4Fe-4S] cluster. H46 and H79 together coordinate (2E)-4-hydroxy-3-methylbut-2-enyl diphosphate. Positions 46 and 79 each coordinate dimethylallyl diphosphate. The isopentenyl diphosphate site is built by H46 and H79. C101 contributes to the [4Fe-4S] cluster binding site. H129 contributes to the (2E)-4-hydroxy-3-methylbut-2-enyl diphosphate binding site. H129 provides a ligand contact to dimethylallyl diphosphate. H129 is an isopentenyl diphosphate binding site. The active-site Proton donor is E131. T170 contributes to the (2E)-4-hydroxy-3-methylbut-2-enyl diphosphate binding site. C200 contacts [4Fe-4S] cluster. Residues S228, S229, N230, and S273 each contribute to the (2E)-4-hydroxy-3-methylbut-2-enyl diphosphate site. 4 residues coordinate dimethylallyl diphosphate: S228, S229, N230, and S273. 4 residues coordinate isopentenyl diphosphate: S228, S229, N230, and S273.

It belongs to the IspH family. It depends on [4Fe-4S] cluster as a cofactor.

The enzyme catalyses isopentenyl diphosphate + 2 oxidized [2Fe-2S]-[ferredoxin] + H2O = (2E)-4-hydroxy-3-methylbut-2-enyl diphosphate + 2 reduced [2Fe-2S]-[ferredoxin] + 2 H(+). The catalysed reaction is dimethylallyl diphosphate + 2 oxidized [2Fe-2S]-[ferredoxin] + H2O = (2E)-4-hydroxy-3-methylbut-2-enyl diphosphate + 2 reduced [2Fe-2S]-[ferredoxin] + 2 H(+). The protein operates within isoprenoid biosynthesis; dimethylallyl diphosphate biosynthesis; dimethylallyl diphosphate from (2E)-4-hydroxy-3-methylbutenyl diphosphate: step 1/1. Its pathway is isoprenoid biosynthesis; isopentenyl diphosphate biosynthesis via DXP pathway; isopentenyl diphosphate from 1-deoxy-D-xylulose 5-phosphate: step 6/6. In terms of biological role, catalyzes the conversion of 1-hydroxy-2-methyl-2-(E)-butenyl 4-diphosphate (HMBPP) into a mixture of isopentenyl diphosphate (IPP) and dimethylallyl diphosphate (DMAPP). Acts in the terminal step of the DOXP/MEP pathway for isoprenoid precursor biosynthesis. This chain is 4-hydroxy-3-methylbut-2-enyl diphosphate reductase, found in Cereibacter sphaeroides (strain ATCC 17023 / DSM 158 / JCM 6121 / CCUG 31486 / LMG 2827 / NBRC 12203 / NCIMB 8253 / ATH 2.4.1.) (Rhodobacter sphaeroides).